Here is a 433-residue protein sequence, read N- to C-terminus: O-methyltransferase VdtC (433 aa).

An S-adenosyl-L-methionine-binding site is contributed by aspartate 284. Histidine 335 serves as the catalytic Proton acceptor.

It belongs to the class I-like SAM-binding methyltransferase superfamily. Cation-independent O-methyltransferase family. COMT subfamily.

It carries out the reaction 7,9,10-trihydroxy-3-(2-oxopropyl)-1H-benzo[g]isochromen-1-one + S-adenosyl-L-methionine = 9,10-dihydroxy-7-methoxy-3-(2-oxopropyl)-1H-benzo[g]isochromen-1-one + S-adenosyl-L-homocysteine + H(+). The protein operates within secondary metabolite biosynthesis. O-methyltransferase; part of the gene cluster that mediates the biosynthesis of viriditoxin, one of the 'classical' secondary metabolites produced by fungi and that has antibacterial activity. The first step is performed by the polyketide synthase VdtA which condenses one acetyl-CoA and 6 malonyl-CoA units to form the heptaketide monomer backbone of viriditoxin. The product of VdtA is then O-methylated on C7 by the O-methyltransferase VdtC. The O-methyl group is important for the stereoselective coupling of the monomers at the final step of viriditoxin biosynthesis. The short-chain dehydrogenase/reductase VdtF then acts as a stereospecific reductase converting the pyrone to dihydropyrone via the reduction of the C3-C4 double bond. The FAD-binding monooxygenase VdtE then converts the ketone group into a methyl-ester group to yield semi-viriditoxin. Finally, the laccase VdtB is involved in dimerization of 2 semi-viriditoxin molecules to yield the final viriditoxin. VdtB is responsible for the regioselective 6,6'-coupling of semi-viriditoxin, which yields (M)-viriditoxin and (P)-viriditoxin at a ratio of 1:2. The non-catalytic carboxylesterase-like protein VdtD affects the stereochemistical outcome of the coupling. The highly reducing polyketide synthase VdtX is not involved in viriditoxin synthesis, but might possibly play a role in the production of additional metabolites not identified yet. The polypeptide is O-methyltransferase VdtC (Byssochlamys spectabilis (Paecilomyces variotii)).